The primary structure comprises 812 residues: cAMP-regulated phosphoprotein 21 (812 aa).

Residues 1–130 are disordered; sequence MSEQGDLNQA…KDKTSEKPKI (130 aa). Position 2 is an N-acetylserine (serine 2). Positions 9–25 are enriched in low complexity; sequence QAIAEEGGTEQETATPE. A coiled-coil region spans residues 32–58; the sequence is ESLDEEEKLELQRRLEAQNQERRKSKS. At serine 33 the chain carries Phosphoserine. Basic and acidic residues predominate over residues 40–53; it reads LELQRRLEAQNQER. At serine 56 the chain carries Phosphoserine. The span at 90-100 shows a compositional bias: low complexity; that stretch reads IHLQLSSFSSL. Positions 102-130 are enriched in basic and acidic residues; it reads EEDKSRKDDSEREKEKDKNKDKTSEKPKI. Serine 134 bears the Phosphoserine mark. Residues 164–227 enclose the R3H domain; the sequence is RMILLKMEQE…SVIINKTSST (64 aa). The 73-residue stretch at 228-300 folds into the SUZ domain; that stretch reads RIPEQRFCEH…VRERIFAHDS (73 aa). The segment at 246–281 is disordered; that stretch reads SQKRFILKRDNSSIDKEDNQQNRMHPFRDDRRSKSI. Position 300 is a phosphoserine (serine 300). Disordered stretches follow at residues 332–436, 485–544, and 561–632; these read RGNR…PLVS, HTGQ…MAGP, and LSRQ…QQPP. The span at 339–349 shows a compositional bias: low complexity; that stretch reads GRTSGSRQSSS. A compositionally biased stretch (basic and acidic residues) spans 351–360; the sequence is NELKWSDHQR. The segment covering 361–373 has biased composition (polar residues); sequence AWSSTDSDSSNRN. Residues serine 363 and serine 383 each carry the phosphoserine modification. Low complexity predominate over residues 391 to 423; it reads TRGDSTSSTRSTGKLSKAGSESSSSAGSSGSLS. Serine 562 is modified (phosphoserine). The span at 582 to 602 shows a compositional bias: polar residues; the sequence is LMPQPAQQPSYVIASTGQQLP. Residues 619–632 show a composition bias toward pro residues; sequence QPPPSPQGFVQQPP. Arginine 655 carries the asymmetric dimethylarginine modification.

In terms of assembly, interacts with CALM1. In terms of processing, phosphorylation at Ser-56 favors interaction with CALM1. Isoform 1 is methylated by CARM1 at Arg-655 in immature thymocytes. As to expression, isoform 2 is expressed in brain. Isoform 1 is present in immature thymocytes (at protein level).

It is found in the cytoplasm. Isoform 2 may act as a competitive inhibitor of calmodulin-dependent enzymes such as calcineurin in neurons. The polypeptide is cAMP-regulated phosphoprotein 21 (ARPP21) (Homo sapiens (Human)).